A 111-amino-acid chain; its full sequence is UPF0342 protein SAG1376 (111 aa).

Residues 52-63 are compositionally biased toward polar residues; the sequence is QEMMQSGQMPSQ. The interval 52-71 is disordered; sequence QEMMQSGQMPSQEEQDEMSK.

Belongs to the UPF0342 family.

The sequence is that of UPF0342 protein SAG1376 from Streptococcus agalactiae serotype V (strain ATCC BAA-611 / 2603 V/R).